Consider the following 2227-residue polypeptide: Genome polyprotein (2227 aa).

2 short sequence motifs ((L)YPX(n)L motif) span residues 167-171 (YPHGL) and 200-205 (YPVWEL). The involved in P1-2A pentamerization stretch occupies residues 766–836 (MMSRIAAGDL…PRKMKGLFSQ (71 aa)). A helical membrane pass occupies residues 1010–1030 (VTVEIINTVLCFVKSGILLYV). The tract at residues 1043-1070 (IGLLRVMNYADIGCSVISCGKVFSKMLE) is membrane-penetrating ability. Residues 1127–1152 (KKKDVLNVLKDNQQKIERAIEEADNF) adopt a coiled-coil conformation. Residues 1204 to 1366 (HQKLKNLGSI…SFFKNPHNDM (163 aa)) enclose the SF3 helicase domain. An ATP-binding site is contributed by 1230–1237 (GKRGGGKS). The chain crosses the membrane as a helical span at residues 1462 to 1482 (WVAVGAAVGILGVLVGGWFVY). Tyr-1499 is modified (O-(5'-phospho-RNA)-tyrosine). Residues 1514 to 1728 (DPVESQSTLE…VAKLVTQEMF (215 aa)) form the Peptidase C3 domain. Catalysis depends on for protease 3C activity residues His-1563, Asp-1603, and Cys-1691. Positions 1976-2097 (DVGLDLDFSA…VFSRDIQIDN (122 aa)) constitute a RdRp catalytic domain. Asp-2083 functions as the For RdRp activity in the catalytic mechanism.

Belongs to the picornaviridae polyprotein family. As to quaternary structure, homodimer. Homomultimer; probably interacts with membranes in a multimeric form. Seems to assemble into amyloid-like fibers. Homodimer. Monomer. Interacts with protein 3CD. In terms of assembly, interacts with host ACBD3. As to quaternary structure, interacts with protein 3AB. Interacts with human MAVS. In terms of assembly, homodimer; disulfide-linked. As to quaternary structure, homopentamer. Homooligomer. Interacts with capsid protein VP2. Interacts with capsid protein VP3. In terms of assembly, interacts with capsid protein VP1. Interacts with capsid protein VP3. As to quaternary structure, interacts with capsid protein VP1. Interacts with capsid protein VP2. In terms of processing, specific enzymatic cleavages by viral protease in vivo yield a variety of precursors and mature proteins. Polyprotein processing intermediates are produced, such as P1-2A which is a functional precursor of the structural proteins, VP0 which is a VP4-VP2 precursor, VP1-2A precursor, 3ABC precursor which is a stable and catalytically active precursor of 3A, 3B and 3C proteins, 3AB and 3CD precursors. The assembly signal 2A is removed from VP1-2A by a host protease, possibly host Cathepsin L. This cleavage occurs over a region of 3 amino-acids probably generating VP1 proteins with heterogeneous C-termini. During virion maturation, immature virions are rendered infectious following cleavage of VP0 into VP4 and VP2. This maturation seems to be an autocatalytic event triggered by the presence of RNA in the capsid and is followed by a conformational change of the particle. Post-translationally, the assembly signal 2A is removed from VP1-2A by a host protease, possibly host Cathepsin L in naked virions. This cleavage does not occur in enveloped virions. This cleavage occurs over a region of 3 amino-acids probably generating VP1 proteins with heterogeneous C-termini. In terms of processing, VPg is uridylylated prior to priming replication into VPg-pUpU. Unlike other picornaviruses, does not seem to be myristoylated.

It is found in the virion. Its subcellular location is the host endosome. It localises to the host multivesicular body. The protein localises to the host membrane. The protein resides in the host mitochondrion outer membrane. It is found in the host cytoplasm. Its subcellular location is the host cytoplasmic vesicle membrane. The enzyme catalyses RNA(n) + a ribonucleoside 5'-triphosphate = RNA(n+1) + diphosphate. It carries out the reaction a ribonucleoside 5'-triphosphate + H2O = a ribonucleoside 5'-diphosphate + phosphate + H(+). It catalyses the reaction Selective cleavage of Gln-|-Gly bond in the poliovirus polyprotein. In other picornavirus reactions Glu may be substituted for Gln, and Ser or Thr for Gly.. Capsid proteins VP1, VP2, and VP3 form a closed capsid enclosing the viral positive strand RNA genome. All these proteins contain a beta-sheet structure called beta-barrel jelly roll. Together they form an icosahedral capsid (T=3) composed of 60 copies of each VP1, VP2, and VP3, with a diameter of approximately 300 Angstroms. VP1 is situated at the 12 fivefold axes, whereas VP2 and VP3 are located at the quasi-sixfold axes. The naked capsid interacts with the host receptor HAVCR1 to provide virion attachment to and probably entry into the target cell. Its function is as follows. VP0 precursor is a component of the immature procapsids. In terms of biological role, plays a role in the assembly of the 12 pentamers into an icosahedral structure. Has not been detected in mature virions, supposedly owing to its small size. Functionally, precursor component of immature procapsids that corresponds to an extended form of the structural protein VP1. After maturation, possibly by the host Cathepsin L, the assembly signal 2A is cleaved to give rise to the mature VP1 protein. Functions as a viroporin. Affects membrane integrity and causes an increase in membrane permeability. Involved in host intracellular membrane rearrangements probably to give rise to the viral factories. Does not disrupt calcium homeostasis or glycoprotein trafficking. Antagonizes the innate immune response of the host by suppressing IFN-beta synthesis, which it achieves by interfering with the RIG-I/IFIH1 pathway. Its function is as follows. Affects membrane integrity and causes an increase in membrane permeability. In terms of biological role, associates with and induces structural rearrangements of intracellular membranes. Displays RNA-binding activity. Functionally, the precursor 3ABC is targeted to the mitochondrial membrane where protease 3C activity cleaves and inhibits the host antiviral protein MAVS, thereby disrupting activation of IRF3 through the IFIH1/MDA5 pathway. In vivo, the protease activity of 3ABC precursor is more efficient in cleaving the 2BC precursor than that of protein 3C. The 3ABC precursor may therefore play a role in the proteolytic processing of the polyprotein. Possible viroporin. Interacts with the 3CD precursor and with RNA structures found at both the 5'- and 3'-termini of the viral genome. Since the 3AB precursor contains the hydrophobic domain 3A, it probably anchors the whole viral replicase complex to intracellular membranes on which viral RNA synthesis occurs. Its function is as follows. May serve as membrane anchor to the 3AB and 3ABC precursors via its hydrophobic domain. May interact with RNA. In terms of biological role, acts as a primer for viral RNA replication and remains covalently bound to viral genomic RNA. VPg is uridylylated prior to priming replication into VPg-pUpU. The VPg-pUpU is then used as primer on the genomic RNA poly(A) by the RNA-dependent RNA polymerase to replicate the viral genome. Functionally, cysteine protease that generates mature viral proteins from the precursor polyprotein. In addition to its proteolytic activity, it binds to viral RNA, and thus influences viral genome replication. RNA and substrate bind cooperatively to the protease. Cleaves IKBKG/NEMO to impair innate immune signaling. Cleaves host PABPC1 which may participate in the switch of viral translation to RNA synthesis. Interacts with the 3AB precursor and with RNA structures found at both the 5'- and 3'-termini of the viral genome. Disrupts TLR3 signaling by degrading the host adapter protein TICAM1/TRIF. Its function is as follows. RNA-directed RNA polymerase 3D-POL replicates genomic and antigenomic RNA by recognizing replications specific signals. The protein is Genome polyprotein of Human hepatitis A virus genotype IIB (isolate SLF88) (HHAV).